Here is a 452-residue protein sequence, read N- to C-terminus: Bifunctional protein GlmU (452 aa).

The interval 1-224 is pyrophosphorylase; that stretch reads MNIVILAAGM…VWETHGVNSK (224 aa). Residues 6 to 9, Lys20, Gln71, 76 to 77, 98 to 100, Gly135, Glu149, Asn164, and Asn222 contribute to the UDP-N-acetyl-alpha-D-glucosamine site; these read LAAG, GT, and YGD. Asp100 is a Mg(2+) binding site. Residue Asn222 participates in Mg(2+) binding. The linker stretch occupies residues 225 to 245; sequence VQLAELERVHQNNIARALLEH. The tract at residues 246 to 452 is N-acetyltransferase; it reads GVTLADPARI…GWQRPVKIKK (207 aa). Positions 328 and 346 each coordinate UDP-N-acetyl-alpha-D-glucosamine. His358 serves as the catalytic Proton acceptor. UDP-N-acetyl-alpha-D-glucosamine contacts are provided by Tyr361 and Asn372. Residues Ala375, 381 to 382, Ser400, Ala418, and Arg435 each bind acetyl-CoA; that span reads NY.

In the N-terminal section; belongs to the N-acetylglucosamine-1-phosphate uridyltransferase family. This sequence in the C-terminal section; belongs to the transferase hexapeptide repeat family. As to quaternary structure, homotrimer. The cofactor is Mg(2+).

It is found in the cytoplasm. The enzyme catalyses alpha-D-glucosamine 1-phosphate + acetyl-CoA = N-acetyl-alpha-D-glucosamine 1-phosphate + CoA + H(+). It catalyses the reaction N-acetyl-alpha-D-glucosamine 1-phosphate + UTP + H(+) = UDP-N-acetyl-alpha-D-glucosamine + diphosphate. It functions in the pathway nucleotide-sugar biosynthesis; UDP-N-acetyl-alpha-D-glucosamine biosynthesis; N-acetyl-alpha-D-glucosamine 1-phosphate from alpha-D-glucosamine 6-phosphate (route II): step 2/2. The protein operates within nucleotide-sugar biosynthesis; UDP-N-acetyl-alpha-D-glucosamine biosynthesis; UDP-N-acetyl-alpha-D-glucosamine from N-acetyl-alpha-D-glucosamine 1-phosphate: step 1/1. It participates in bacterial outer membrane biogenesis; LPS lipid A biosynthesis. Catalyzes the last two sequential reactions in the de novo biosynthetic pathway for UDP-N-acetylglucosamine (UDP-GlcNAc). The C-terminal domain catalyzes the transfer of acetyl group from acetyl coenzyme A to glucosamine-1-phosphate (GlcN-1-P) to produce N-acetylglucosamine-1-phosphate (GlcNAc-1-P), which is converted into UDP-GlcNAc by the transfer of uridine 5-monophosphate (from uridine 5-triphosphate), a reaction catalyzed by the N-terminal domain. In Herminiimonas arsenicoxydans, this protein is Bifunctional protein GlmU.